Consider the following 451-residue polypeptide: tRNA modification GTPase MnmE (451 aa).

3 residues coordinate (6S)-5-formyl-5,6,7,8-tetrahydrofolate: R37, E95, and K135. The 145-residue stretch at 232-376 (GLSIVIMGPP…LVEAIADFAG (145 aa)) folds into the TrmE-type G domain. K(+) is bound at residue N242. Residues 242–247 (NAGKST), 261–267 (SEIAGTT), and 286–289 (DTAG) each bind GTP. S246 serves as a coordination point for Mg(2+). Residues S261, I263, and T266 each contribute to the K(+) site. T267 provides a ligand contact to Mg(2+). K451 serves as a coordination point for (6S)-5-formyl-5,6,7,8-tetrahydrofolate.

The protein belongs to the TRAFAC class TrmE-Era-EngA-EngB-Septin-like GTPase superfamily. TrmE GTPase family. Homodimer. Heterotetramer of two MnmE and two MnmG subunits. Requires K(+) as cofactor.

The protein resides in the cytoplasm. Exhibits a very high intrinsic GTPase hydrolysis rate. Involved in the addition of a carboxymethylaminomethyl (cmnm) group at the wobble position (U34) of certain tRNAs, forming tRNA-cmnm(5)s(2)U34. The sequence is that of tRNA modification GTPase MnmE from Beijerinckia indica subsp. indica (strain ATCC 9039 / DSM 1715 / NCIMB 8712).